Reading from the N-terminus, the 288-residue chain is 2-hydroxy-6-oxononadienedioate/2-hydroxy-6-oxononatrienedioate hydrolase (288 aa).

His267 acts as the Proton acceptor in catalysis.

Belongs to the AB hydrolase superfamily. MhpC family. As to quaternary structure, homodimer.

The enzyme catalyses (2Z,4E)-2-hydroxy-6-oxonona-2,4-dienedioate + H2O = (2Z)-2-hydroxypenta-2,4-dienoate + succinate + H(+). It catalyses the reaction (2Z,4E,7E)-2-hydroxy-6-oxonona-2,4,7-trienedioate + H2O = (2Z)-2-hydroxypenta-2,4-dienoate + fumarate + H(+). It participates in aromatic compound metabolism; 3-phenylpropanoate degradation. Functionally, catalyzes the cleavage of the C5-C6 bond of 2-hydroxy-6-oxononadienedioate and 2-hydroxy-6-oxononatrienedioate, a dienol ring fission product of the bacterial meta-cleavage pathway for degradation of phenylpropionic acid. This chain is 2-hydroxy-6-oxononadienedioate/2-hydroxy-6-oxononatrienedioate hydrolase, found in Escherichia coli O81 (strain ED1a).